The following is an 898-amino-acid chain: Alanine--tRNA ligase (898 aa).

Zn(2+)-binding residues include H584, H588, C686, and H690.

This sequence belongs to the class-II aminoacyl-tRNA synthetase family. The cofactor is Zn(2+).

It is found in the cytoplasm. The enzyme catalyses tRNA(Ala) + L-alanine + ATP = L-alanyl-tRNA(Ala) + AMP + diphosphate. Functionally, catalyzes the attachment of alanine to tRNA(Ala) in a two-step reaction: alanine is first activated by ATP to form Ala-AMP and then transferred to the acceptor end of tRNA(Ala). Also edits incorrectly charged Ser-tRNA(Ala) and Gly-tRNA(Ala) via its editing domain. In Myxococcus xanthus (strain DK1622), this protein is Alanine--tRNA ligase.